The sequence spans 518 residues: Chromosomal replication initiator protein DnaA (518 aa).

The interval 1–72 (MTLAEFWPLC…VREELAAGRS (72 aa)) is domain I, interacts with DnaA modulators. The interval 72 to 180 (SAFVFKPGEG…DAEEARYEQT (109 aa)) is domain II. The tract at residues 145–178 (EPRQAAGSASRPESAAVAKARTDAQRDAEEARYE) is disordered. Over residues 164–177 (ARTDAQRDAEEARY) the composition is skewed to basic and acidic residues. The domain III, AAA+ region stretch occupies residues 181–397 (NLSPDYTFDT…GAFNRVGASS (217 aa)). ATP is bound by residues G225, G227, K228, and T229. The segment at 398 to 518 (RFMNRPVIDI…YEKLLILIQN (121 aa)) is domain IV, binds dsDNA.

This sequence belongs to the DnaA family. As to quaternary structure, oligomerizes as a right-handed, spiral filament on DNA at oriC.

Its subcellular location is the cytoplasm. Plays an essential role in the initiation and regulation of chromosomal replication. ATP-DnaA binds to the origin of replication (oriC) to initiate formation of the DNA replication initiation complex once per cell cycle. Binds the DnaA box (a 9 base pair repeat at the origin) and separates the double-stranded (ds)DNA. Forms a right-handed helical filament on oriC DNA; dsDNA binds to the exterior of the filament while single-stranded (ss)DNA is stabiized in the filament's interior. The ATP-DnaA-oriC complex binds and stabilizes one strand of the AT-rich DNA unwinding element (DUE), permitting loading of DNA polymerase. After initiation quickly degrades to an ADP-DnaA complex that is not apt for DNA replication. Binds acidic phospholipids. This is Chromosomal replication initiator protein DnaA from Neisseria meningitidis serogroup A / serotype 4A (strain DSM 15465 / Z2491).